Here is a 149-residue protein sequence, read N- to C-terminus: Ribonuclease pancreatic (149 aa).

The first 25 residues, 1–25 (MGLEKSFILFSLLVLVLGWVQPSLS), serve as a signal peptide directing secretion. Basic and acidic residues predominate over residues 30–40 (ADKFKRQHMDT). The disordered stretch occupies residues 30 to 49 (ADKFKRQHMDTEGSSNSSPT). Positions 32 and 35 each coordinate substrate. Catalysis depends on His-37, which acts as the Proton acceptor. Cystine bridges form between Cys-51-Cys-109, Cys-65-Cys-120, Cys-83-Cys-135, and Cys-90-Cys-97. Residue Asn-62 is glycosylated (N-linked (GlcNAc...) asparagine). 66 to 70 (KPVNT) is a substrate binding site. N-linked (GlcNAc...) asparagine glycosylation is present at Asn-87. Substrate contacts are provided by Lys-91 and Arg-110. The Proton donor role is filled by His-144.

It belongs to the pancreatic ribonuclease family. In terms of assembly, monomer. Interacts with and forms tight 1:1 complexes with RNH1. Dimerization of two such complexes may occur. Interaction with RNH1 inhibits this protein. As to expression, pancreas.

The protein localises to the secreted. It carries out the reaction an [RNA] containing cytidine + H2O = an [RNA]-3'-cytidine-3'-phosphate + a 5'-hydroxy-ribonucleotide-3'-[RNA].. It catalyses the reaction an [RNA] containing uridine + H2O = an [RNA]-3'-uridine-3'-phosphate + a 5'-hydroxy-ribonucleotide-3'-[RNA].. Its function is as follows. Endonuclease that catalyzes the cleavage of RNA on the 3' side of pyrimidine nucleotides. Acts on single-stranded and double-stranded RNA. In Niviventer cremoriventer (Dark-tailed tree rat), this protein is Ribonuclease pancreatic (RNASE1).